The primary structure comprises 951 residues: Valine--tRNA ligase (951 aa).

The short motif at 42 to 52 (PNVTGSLHMGH) is the 'HIGH' region element. Residues 554–558 (KMSKS) carry the 'KMSKS' region motif. Lysine 557 provides a ligand contact to ATP. Positions 880–944 (AGLINKEDEL…AEAKAKLIEQ (65 aa)) form a coiled coil.

Belongs to the class-I aminoacyl-tRNA synthetase family. ValS type 1 subfamily. As to quaternary structure, monomer.

The protein localises to the cytoplasm. The enzyme catalyses tRNA(Val) + L-valine + ATP = L-valyl-tRNA(Val) + AMP + diphosphate. In terms of biological role, catalyzes the attachment of valine to tRNA(Val). As ValRS can inadvertently accommodate and process structurally similar amino acids such as threonine, to avoid such errors, it has a 'posttransfer' editing activity that hydrolyzes mischarged Thr-tRNA(Val) in a tRNA-dependent manner. This Salmonella paratyphi A (strain ATCC 9150 / SARB42) protein is Valine--tRNA ligase.